Reading from the N-terminus, the 182-residue chain is uncharacterized protein (182 aa).

Residues 1-177 (MEFSVGGVEV…KFLEVFKKHL (177 aa)) enclose the Macro domain.

This is an uncharacterized protein from Pyrobaculum aerophilum (strain ATCC 51768 / DSM 7523 / JCM 9630 / CIP 104966 / NBRC 100827 / IM2).